The following is a 247-amino-acid chain: Programmed cell death 1 ligand 2 (247 aa).

Positions methionine 1–alanine 19 are cleaved as a signal peptide. The Extracellular portion of the chain corresponds to leucine 20–tryptophan 221. One can recognise an Ig-like V-type domain in the interval phenylalanine 21–lysine 118. Disulfide bonds link cysteine 42/cysteine 102 and cysteine 143/cysteine 192. N-linked (GlcNAc...) asparagine glycans are attached at residues asparagine 64, asparagine 157, asparagine 163, and asparagine 189. The Ig-like C2-type domain occupies serine 122–threonine 203. Residues proline 222–isoleucine 242 traverse the membrane as a helical segment. At glutamine 243–isoleucine 247 the chain is on the cytoplasmic side.

The protein belongs to the immunoglobulin superfamily. BTN/MOG family. Interacts with PDCD1. In terms of tissue distribution, expressed in immature and mature bone marrow-derived dendritic cells and splenic dendritic cells. Highly expressed in placenta, liver and weakly expressed in heart, spleen, lymph nodes and thymus. Also expressed in some tumor cell lines of lymphoid origin.

The protein resides in the cell membrane. In terms of biological role, involved in the costimulatory signal essential for T-cell proliferation and IFNG production in a PDCD1-independent manner. Interaction with PDCD1 inhibits T-cell proliferation by blocking cell cycle progression and cytokine production. The polypeptide is Programmed cell death 1 ligand 2 (Pdcd1lg2) (Mus musculus (Mouse)).